A 96-amino-acid chain; its full sequence is Co-chaperonin GroES (96 aa).

This sequence belongs to the GroES chaperonin family. Heptamer of 7 subunits arranged in a ring. Interacts with the chaperonin GroEL.

The protein resides in the cytoplasm. In terms of biological role, together with the chaperonin GroEL, plays an essential role in assisting protein folding. The GroEL-GroES system forms a nano-cage that allows encapsulation of the non-native substrate proteins and provides a physical environment optimized to promote and accelerate protein folding. GroES binds to the apical surface of the GroEL ring, thereby capping the opening of the GroEL channel. This Ralstonia nicotianae (strain ATCC BAA-1114 / GMI1000) (Ralstonia solanacearum) protein is Co-chaperonin GroES.